The sequence spans 511 residues: Activin receptor type-2B (511 aa).

The signal sequence occupies residues 1–20; it reads MGASVALTFLLLLATFRAGS. The Extracellular portion of the chain corresponds to 21-136; sequence GHDEVETREC…KPQPSASVLN (116 aa). A disulfide bridge links cysteine 30 with cysteine 61. Asparagine 43 and asparagine 67 each carry an N-linked (GlcNAc...) asparagine glycan. Cystine bridges form between cysteine 86–cysteine 105, cysteine 92–cysteine 104, and cysteine 106–cysteine 111. The chain crosses the membrane as a helical span at residues 137 to 157; sequence ILIYSLLPIVGLSMAILLAFW. Residues 158-511 lie on the Cytoplasmic side of the membrane; it reads MYRHRKPSYG…VDLPPKESSI (354 aa). Residues 189-477 enclose the Protein kinase domain; sequence LQLLDIKARG…LSAGCVEERI (289 aa). ATP-binding positions include 195-203 and lysine 216; that span reads KARGRFGCV. The Proton acceptor role is filled by aspartate 320.

Belongs to the protein kinase superfamily. TKL Ser/Thr protein kinase family. TGFB receptor subfamily.

The protein localises to the membrane. The catalysed reaction is L-threonyl-[receptor-protein] + ATP = O-phospho-L-threonyl-[receptor-protein] + ADP + H(+). It catalyses the reaction L-seryl-[receptor-protein] + ATP = O-phospho-L-seryl-[receptor-protein] + ADP + H(+). In terms of biological role, receptor for activin A, activin B and inhibin A. Involved in transmembrane signaling. The chain is Activin receptor type-2B (acvr2b) from Xenopus laevis (African clawed frog).